We begin with the raw amino-acid sequence, 462 residues long: ATP synthase subunit beta (462 aa).

Residue 150–157 (GGAGVGKT) coordinates ATP.

Belongs to the ATPase alpha/beta chains family. F-type ATPases have 2 components, CF(1) - the catalytic core - and CF(0) - the membrane proton channel. CF(1) has five subunits: alpha(3), beta(3), gamma(1), delta(1), epsilon(1). CF(0) has three main subunits: a(1), b(2) and c(9-12). The alpha and beta chains form an alternating ring which encloses part of the gamma chain. CF(1) is attached to CF(0) by a central stalk formed by the gamma and epsilon chains, while a peripheral stalk is formed by the delta and b chains.

The protein localises to the cell membrane. The enzyme catalyses ATP + H2O + 4 H(+)(in) = ADP + phosphate + 5 H(+)(out). Functionally, produces ATP from ADP in the presence of a proton gradient across the membrane. The catalytic sites are hosted primarily by the beta subunits. The chain is ATP synthase subunit beta from Wigglesworthia glossinidia brevipalpis.